We begin with the raw amino-acid sequence, 630 residues long: Altered inheritance of mitochondria protein 9, mitochondrial (630 aa).

The transit peptide at 1-40 directs the protein to the mitochondrion; that stretch reads MLKLTSRVGPKRLSSGLKSSSFKVNATIISKKFQSSLNSK.

Belongs to the AIM9 family.

The protein resides in the mitochondrion. The sequence is that of Altered inheritance of mitochondria protein 9, mitochondrial (AIM9) from Debaryomyces hansenii (strain ATCC 36239 / CBS 767 / BCRC 21394 / JCM 1990 / NBRC 0083 / IGC 2968) (Yeast).